Reading from the N-terminus, the 360-residue chain is Phospho-N-acetylmuramoyl-pentapeptide-transferase (360 aa).

10 helical membrane passes run 26–46 (AILG…ILIK), 73–93 (TMGG…WGDL), 97–117 (YVLV…IDDY), 135–155 (ALQS…STMV), 168–188 (IMPQ…VGAS), 199–219 (GLAI…AYLS), 236–256 (AGEL…FLWF), 263–283 (VFMG…IAIL), 288–308 (ILLV…ILQV), and 338–358 (VIVR…ATLK).

Belongs to the glycosyltransferase 4 family. MraY subfamily. It depends on Mg(2+) as a cofactor.

The protein resides in the cell inner membrane. It catalyses the reaction UDP-N-acetyl-alpha-D-muramoyl-L-alanyl-gamma-D-glutamyl-meso-2,6-diaminopimeloyl-D-alanyl-D-alanine + di-trans,octa-cis-undecaprenyl phosphate = di-trans,octa-cis-undecaprenyl diphospho-N-acetyl-alpha-D-muramoyl-L-alanyl-D-glutamyl-meso-2,6-diaminopimeloyl-D-alanyl-D-alanine + UMP. It functions in the pathway cell wall biogenesis; peptidoglycan biosynthesis. In terms of biological role, catalyzes the initial step of the lipid cycle reactions in the biosynthesis of the cell wall peptidoglycan: transfers peptidoglycan precursor phospho-MurNAc-pentapeptide from UDP-MurNAc-pentapeptide onto the lipid carrier undecaprenyl phosphate, yielding undecaprenyl-pyrophosphoryl-MurNAc-pentapeptide, known as lipid I. This Shewanella frigidimarina (strain NCIMB 400) protein is Phospho-N-acetylmuramoyl-pentapeptide-transferase.